Consider the following 413-residue polypeptide: Serine hydroxymethyltransferase (413 aa).

Residues Leu119 and Gly123–Leu125 contribute to the (6S)-5,6,7,8-tetrahydrofolate site. Residue Lys228 is modified to N6-(pyridoxal phosphate)lysine. Residue Ser351 to Phe353 coordinates (6S)-5,6,7,8-tetrahydrofolate.

The protein belongs to the SHMT family. As to quaternary structure, homodimer. The cofactor is pyridoxal 5'-phosphate.

The protein resides in the cytoplasm. The enzyme catalyses (6R)-5,10-methylene-5,6,7,8-tetrahydrofolate + glycine + H2O = (6S)-5,6,7,8-tetrahydrofolate + L-serine. Its pathway is one-carbon metabolism; tetrahydrofolate interconversion. It functions in the pathway amino-acid biosynthesis; glycine biosynthesis; glycine from L-serine: step 1/1. Catalyzes the reversible interconversion of serine and glycine with tetrahydrofolate (THF) serving as the one-carbon carrier. This reaction serves as the major source of one-carbon groups required for the biosynthesis of purines, thymidylate, methionine, and other important biomolecules. Also exhibits THF-independent aldolase activity toward beta-hydroxyamino acids, producing glycine and aldehydes, via a retro-aldol mechanism. The polypeptide is Serine hydroxymethyltransferase (Clostridium botulinum (strain Langeland / NCTC 10281 / Type F)).